A 720-amino-acid polypeptide reads, in one-letter code: UV-stimulated scaffold protein A (720 aa).

The segment at 2-145 (DQKLSQLIEE…HFLKHTKKVD (144 aa)) is VHS-like. Residues 169–198 (KIHRESADRAKREMEEMSDEIGCCLTEVEN) are a coiled coil. Disordered stretches follow at residues 234–253 (PDLATPRGSGLSGPQDEEQP), 269–304 (AVGLKAPAPAATEDPCRDEDRHSEHSDPEDFLRSHG), and 392–415 (PGRGQRSRTEALEDSEEEDQDFVE). A compositionally biased stretch (basic and acidic residues) spans 282–301 (DPCRDEDRHSEHSDPEDFLR). Phosphoserine is present on residues S294 and S406. A compositionally biased stretch (acidic residues) spans 403–415 (LEDSEEEDQDFVE). K419 is covalently cross-linked (Glycyl lysine isopeptide (Lys-Gly) (interchain with G-Cter in ubiquitin)). A disordered region spans residues 451 to 507 (VCSVQERTRRRREEEASDPTSAAAQMLRLQDCLSSPSSSSTRGPLGPEEAQKQAERA). The UVSSA-type zinc finger occupies 574-601 (QHKCRALRPNGRLCERQDRLKCPFHGKI). C577, C587, C595, and H598 together coordinate Zn(2+). Disordered regions lie at residues 598 to 637 (HGKIIPRDDKGQPLNPEDRAREQRQQLQQQRAHPDWQDPE) and 649 to 669 (DLGSSKYSKKGKGKKKKHPNL). Basic and acidic residues predominate over residues 602–621 (IPRDDKGQPLNPEDRAREQR). Residues 655-667 (YSKKGKGKKKKHP) show a composition bias toward basic residues.

Belongs to the UVSSA family. In terms of assembly, interacts with the elongating form of RNA polymerase II (RNA pol IIo) during transcription stress. Interacts with the TFIIH complex during transcription stress. Interacts with ERCC6. Interacts with ERCC8. Interacts with USP7. Post-translationally, monoubiquitinated at Lys-419 in response to transcription stress; this promotes efficient transfer of TFIIH to stalled RNA polymerase II.

The protein resides in the chromosome. In terms of biological role, factor involved in transcription-coupled nucleotide excision repair (TC-NER), a mechanism that rapidly removes RNA polymerase II-blocking lesions from the transcribed strand of active genes. Acts as a key adapter that promotes recruitment of factors involved in TC-NER. Facilitates the ubiquitination of the elongating form of RNA polymerase II (RNA pol IIo) at DNA damage sites, thereby promoting RNA pol IIo backtracking and access by the TC-NER machinery to lesion sites. Also promotes stabilization of ERCC6/CSB by recruiting deubiquitinating enzyme USP7 to TC-NER complexes, preventing UV-induced degradation of ERCC6 by the proteasome. Mediates the recruitment of the TFIIH complex and other factors that are required for nucleotide excision repair to RNA polymerase II. Also required to inactivate stalled RNA polymerase II by blocking the access of TCEA1/TFIIS, thereby preventing reactivation of RNA polymerase II. Not involved in processing oxidative damage. The protein is UV-stimulated scaffold protein A (Uvssa) of Rattus norvegicus (Rat).